Here is a 436-residue protein sequence, read N- to C-terminus: 3-ketoacyl-CoA thiolase (436 aa).

Catalysis depends on cysteine 99, which acts as the Acyl-thioester intermediate. Catalysis depends on proton acceptor residues histidine 392 and cysteine 422.

It belongs to the thiolase-like superfamily. Thiolase family. As to quaternary structure, heterotetramer of two alpha chains (FadJ) and two beta chains (FadI).

It is found in the cytoplasm. The enzyme catalyses an acyl-CoA + acetyl-CoA = a 3-oxoacyl-CoA + CoA. It functions in the pathway lipid metabolism; fatty acid beta-oxidation. Catalyzes the final step of fatty acid oxidation in which acetyl-CoA is released and the CoA ester of a fatty acid two carbons shorter is formed. The chain is 3-ketoacyl-CoA thiolase from Shewanella frigidimarina (strain NCIMB 400).